The following is a 76-amino-acid chain: Protein OPG146 (76 aa).

This sequence belongs to the orthopoxvirus OPG146 family. Interacts with capping enzyme RAP94/OPG109, the two large RNA polymerase subunits RPO147/OPG105 and RPO132/OPG151, the two early transcription factor subunits OPG185 and OPG133, one of the capping enzyme subunits OPG113, the nucleoside triphosphate phosphohydrolase OPG123, two core proteins OPG129 and OPG138, and a virion protein OPG064.

Its subcellular location is the virion. It is found in the host cytoplasm. The protein localises to the host nucleus. Its function is as follows. Plays a role in the maturation of immature virions to infectious particles. May also participate in viral transcription. This chain is Protein OPG146 (OPG146), found in Variola virus (isolate Human/India/Ind3/1967) (VARV).